A 30-amino-acid chain; its full sequence is Ribosome-inactivating protein momorcochin-S (30 aa).

Belongs to the ribosome-inactivating protein family. Type 1 RIP subfamily. Glycosylated.

It carries out the reaction Endohydrolysis of the N-glycosidic bond at one specific adenosine on the 28S rRNA.. In terms of biological role, inactivates eukaryotic 60S ribosomal subunits. This Momordica cochinchinensis (Spiny bitter cucumber) protein is Ribosome-inactivating protein momorcochin-S.